The chain runs to 98 residues: Ribonuclease kappa (98 aa).

2 consecutive transmembrane segments (helical) span residues 13 to 33 (ACGI…GIFF) and 65 to 85 (VSYN…FSFC).

It belongs to the RNase K family. In terms of assembly, interacts with the proton translocation complex V0 of the V-ATPase. Interacts with ATP6AP1.

Its subcellular location is the endomembrane system. The protein localises to the cytoplasmic vesicle. It is found in the clathrin-coated vesicle membrane. Its function is as follows. Endoribonuclease which preferentially cleaves ApU and ApG phosphodiester bonds. Hydrolyzes UpU bonds at a lower rate. Regulates the activity of vacuolar (H+)-ATPase (V-ATPase) which is responsible for acidifying and maintaining the pH of intracellular compartments. Required at an early stage of receptor-mediated endocytosis. The chain is Ribonuclease kappa (Rnasek) from Mus musculus (Mouse).